We begin with the raw amino-acid sequence, 312 residues long: MELIILVGIAIALLVVIITLYLLQKKNAAPETKPAAAPQRGVPQRAQEGVPRRAQIARNQRNRLRQNAPAAPAGQVAPAAGAPAARGDSDHEDEGQVDADDARVPQGAVLDEKMGAKKRAKMEAKEQKRLQREQELHDREQRKVKEAKEEAERKQQEDLEAEVERKRVEAERLAKEERERKEHEEYLKMKAAFSVEEEGFEEGDADEQDSLLAGFIQYIRDNKVVVLEDLAVAFKLKTQQVIDRIQELQADGTLTGVIDDRGKFIYVSEEELSAVAKFIKQRGRVSITELAESSNNLINLTPISAGGEEASS.

Residues 1-2 (ME) lie on the Lumenal side of the membrane. A helical transmembrane segment spans residues 3-23 (LIILVGIAIALLVVIITLYLL). Topologically, residues 24 to 312 (QKKNAAPETK…ISAGGEEASS (289 aa)) are cytoplasmic. A disordered region spans residues 30-163 (PETKPAAAPQ…KQQEDLEAEV (134 aa)). The span at 52–85 (RRAQIARNQRNRLRQNAPAAPAGQVAPAAGAPAA) shows a compositional bias: low complexity. Positions 90 to 99 (DHEDEGQVDA) are enriched in acidic residues. Residues 110-163 (LDEKMGAKKRAKMEAKEQKRLQREQELHDREQRKVKEAKEEAERKQQEDLEAEV) show a composition bias toward basic and acidic residues.

The protein belongs to the DDRGK1 family. As to quaternary structure, interacts with Atg9; the interaction is transient.

It is found in the endoplasmic reticulum membrane. Functionally, substrate adapter for ufmylation, the covalent attachment of the ubiquitin-like modifier UFM1 to substrate proteins. Required for ufmylation of Atg9; protects the nervous system during aging, possibly by stabilizing Atg9 and supporting its function. This Drosophila erecta (Fruit fly) protein is DDRGK domain-containing protein 1.